The primary structure comprises 64 residues: RICLNQQQSTPEDQPTNGQCYIKTDCQNKTWNTHRGSRTDRGCGCPKVKPGINLRCCKTDKCNE.

Cystine bridges form between Cys-3–Cys-26, Cys-20–Cys-43, Cys-45–Cys-56, and Cys-57–Cys-62.

It belongs to the three-finger toxin family. Short-chain subfamily. Type I alpha-neurotoxin sub-subfamily. In terms of tissue distribution, expressed by the venom gland.

The protein resides in the secreted. Binds to muscle nicotinic acetylcholine receptor (nAChR) and inhibit acetylcholine from binding to the receptor, thereby impairing neuromuscular transmission. The polypeptide is Short neurotoxin 1 (Bungarus fasciatus (Banded krait)).